The following is a 195-amino-acid chain: Putative NADH dehydrogenase/NAD(P)H nitroreductase Bcep18194_B1060 (195 aa).

Belongs to the nitroreductase family. HadB/RutE subfamily. FMN is required as a cofactor.

This Burkholderia lata (strain ATCC 17760 / DSM 23089 / LMG 22485 / NCIMB 9086 / R18194 / 383) protein is Putative NADH dehydrogenase/NAD(P)H nitroreductase Bcep18194_B1060.